Consider the following 389-residue polypeptide: SH3 and F-BAR domain-containing protein DDB_G0274695 (389 aa).

The F-BAR domain occupies 3-258; that stretch reads EQFKDNFWGP…VITQIDKLED (256 aa). A coiled-coil region spans residues 119–192; the sequence is KLNKERKDME…QDYRDSVNKL (74 aa). The segment covering 300 to 328 has biased composition (low complexity); sequence LTSSVSSNSLTSSYNSATTTPTPAPRSTP. The interval 300–329 is disordered; it reads LTSSVSSNSLTSSYNSATTTPTPAPRSTPI. An SH3 domain is found at 332–389; the sequence is SKKKQAKALYDYVGSDATELDFFAGDIITILDEDESGWFRGELGDRIGLYPSNYCEPI.

In Dictyostelium discoideum (Social amoeba), this protein is SH3 and F-BAR domain-containing protein DDB_G0274695.